Here is a 390-residue protein sequence, read N- to C-terminus: Bifunctional enzyme IspD/IspF (390 aa).

A 2-C-methyl-D-erythritol 4-phosphate cytidylyltransferase region spans residues 1–229; it reads MAAGRGERAG…RQDHAVFPDI (229 aa). The segment at 230 to 390 is 2-C-methyl-D-erythritol 2,4-cyclodiphosphate synthase; sequence RTGNGYDVHS…TVIYPGEVPE (161 aa). 2 residues coordinate a divalent metal cation: aspartate 236 and histidine 238. Residues 236 to 238 and 262 to 263 contribute to the 4-CDP-2-C-methyl-D-erythritol 2-phosphate site; these read DVH and HS. A divalent metal cation is bound at residue histidine 270. 4-CDP-2-C-methyl-D-erythritol 2-phosphate contacts are provided by residues 284–286, 360–363, phenylalanine 367, and arginine 370; these read DIG and TTNE.

The protein in the N-terminal section; belongs to the IspD/TarI cytidylyltransferase family. IspD subfamily. This sequence in the C-terminal section; belongs to the IspF family. A divalent metal cation serves as cofactor.

It catalyses the reaction 2-C-methyl-D-erythritol 4-phosphate + CTP + H(+) = 4-CDP-2-C-methyl-D-erythritol + diphosphate. The enzyme catalyses 4-CDP-2-C-methyl-D-erythritol 2-phosphate = 2-C-methyl-D-erythritol 2,4-cyclic diphosphate + CMP. It participates in isoprenoid biosynthesis; isopentenyl diphosphate biosynthesis via DXP pathway; isopentenyl diphosphate from 1-deoxy-D-xylulose 5-phosphate: step 2/6. It functions in the pathway isoprenoid biosynthesis; isopentenyl diphosphate biosynthesis via DXP pathway; isopentenyl diphosphate from 1-deoxy-D-xylulose 5-phosphate: step 4/6. Functionally, bifunctional enzyme that catalyzes the formation of 4-diphosphocytidyl-2-C-methyl-D-erythritol from CTP and 2-C-methyl-D-erythritol 4-phosphate (MEP) (IspD), and catalyzes the conversion of 4-diphosphocytidyl-2-C-methyl-D-erythritol 2-phosphate (CDP-ME2P) to 2-C-methyl-D-erythritol 2,4-cyclodiphosphate (ME-CPP) with a corresponding release of cytidine 5-monophosphate (CMP) (IspF). This chain is Bifunctional enzyme IspD/IspF, found in Brucella abortus biovar 1 (strain 9-941).